The sequence spans 138 residues: PilB-specific inhibitory protein CpiA (138 aa).

As to quaternary structure, interacts with PilB but not with TfpB.

Functionally, acts as a PilB inhibitor to control natural transformation. Inhibits type IV pili (T4P) extension by specifically binding and inhibiting the pilus extension ATPase PilB but not TfpB. This activity probably modulates T4P extension under different environmental conditions. This chain is PilB-specific inhibitory protein CpiA, found in Acinetobacter baylyi (strain ATCC 33305 / BD413 / ADP1).